Reading from the N-terminus, the 255-residue chain is Small ribosomal subunit protein eS1 (255 aa).

Alanine 2 bears the N-acetylalanine; partial mark.

Belongs to the eukaryotic ribosomal protein eS1 family. In terms of assembly, component of the small ribosomal subunit. Mature ribosomes consist of a small (40S) and a large (60S) subunit. The 40S subunit contains about 33 different proteins and 1 molecule of RNA (18S). The 60S subunit contains about 49 different proteins and 3 molecules of RNA (25S, 5.8S and 5S).

Its subcellular location is the cytoplasm. This chain is Small ribosomal subunit protein eS1, found in Candida glabrata (strain ATCC 2001 / BCRC 20586 / JCM 3761 / NBRC 0622 / NRRL Y-65 / CBS 138) (Yeast).